The chain runs to 337 residues: Methionine import ATP-binding protein MetN (337 aa).

In terms of domain architecture, ABC transporter spans Ile-4–Val-240. Position 37-44 (Gly-37–Ser-44) interacts with ATP.

Belongs to the ABC transporter superfamily. Methionine importer (TC 3.A.1.24) family. In terms of assembly, the complex is composed of two ATP-binding proteins (MetN), two transmembrane proteins (MetI) and a solute-binding protein (MetQ).

It is found in the cell membrane. The enzyme catalyses L-methionine(out) + ATP + H2O = L-methionine(in) + ADP + phosphate + H(+). The catalysed reaction is D-methionine(out) + ATP + H2O = D-methionine(in) + ADP + phosphate + H(+). In terms of biological role, part of the ABC transporter complex MetNIQ involved in methionine import. Responsible for energy coupling to the transport system. The polypeptide is Methionine import ATP-binding protein MetN (Carboxydothermus hydrogenoformans (strain ATCC BAA-161 / DSM 6008 / Z-2901)).